The following is a 747-amino-acid chain: MAPDSGPFPDGQFLKLLPVDPRDRGTQRCRLGPAAFRSLGVRLGSPMRISLPAGGCCLCTAWPRRDGADGFVQLDLQCASPGAAAAAGRISMDRLQPVSCPPLRRLEVWPVLRPQAGAPSSDAVLEVSQELLRNRPVSRGHVVATPPGIPGPVAALHVVSGTPDPEPAGRVTPHTRITLSDKPPPQVEPPGEVTLGGLSETADSLRELLRLPLCYPLALAALGLAVPRGVLLAGPPGVGKTQLVRAVAREAGAELLAVSAPALQGTRPGETEENVRRVFQRAQELASRGPSLLFLDEVDALCPRRGGPQRAPESRVVAQVLTLLDGIHGDREVVVVGATNRPDELDPALRRPGRFDREVIIGTPTLKQREAILGVITSKMPISSHIDLGLLAEMTVGYVGADLTALCREAATCALLKNEKNQNNPKIEETDFLEAFKKVQPSSFRSSIGLTDIRPVGWEQIGGLEDVKLKLKQCVEWPLKFPQEFARMGLTQPKGLLLYGPPGCAKTTLVRALATSCHCSFVSVCGADLFSPFVGDSEKVLSQVFRQARANTPALVFLDEIDSVLGSRSVGSSGCDARERVLSVLLNELDGVGVRTVERRGSKASQQECQEILSRSVMIVVATNRPDVLDDALLRPGRLDKMVYVPPPDREGRLSILKVCTNNMPIGLNVSLENLAAETCYFSGADLRNLCKEAALFALQENGLEATTVEQEHFTEALKTVKPSLTLKDLTFYENLFKKELSNLEDH.

N-acetylmethionine is present on M1. ATP is bound by residues 234–241 (GPPGVGKT) and 500–507 (GPPGCAKT).

This sequence belongs to the AAA ATPase family. AFG2 subfamily. As to quaternary structure, part of the 55LCC heterohexameric ATPase complex composed at least of AIRIM, AFG2A, AFG2B and CINP. Associates with pre-60S ribosomal particles. As to expression, expressed in neurons; also expressed at lower level in astrocytes, oligodendrocytes and microglia.

Its subcellular location is the cytoplasm. It is found in the cytoskeleton. It localises to the spindle. The protein localises to the nucleus. The enzyme catalyses ATP + H2O = ADP + phosphate + H(+). With respect to regulation, in the context of 55LCC heterohexameric ATPase complex, the ATPase activity is stimulated by DNA binding and inhibited in presence of RNA. Its function is as follows. ATP-dependent chaperone part of the 55LCC heterohexameric ATPase complex which is chromatin-associated and promotes replisome proteostasis to maintain replication fork progression and genome stability. Required for replication fork progression, sister chromatid cohesion, and chromosome stability. The ATPase activity is specifically enhanced by replication fork DNA and is coupled to cysteine protease-dependent cleavage of replisome substrates in response to replication fork damage. Uses ATPase activity to process replisome substrates in S-phase, facilitating their proteolytic turnover from chromatin to ensure DNA replication and mitotic fidelity. Plays an essential role in the cytoplasmic maturation steps of pre-60S ribosomal particles by promoting the release of shuttling protein RSL24D1/RLP24 from the pre-ribosomal particles. This Rattus norvegicus (Rat) protein is ATPase family gene 2 protein homolog B (Afg2b).